The primary structure comprises 216 residues: Sugar transporter SWEET1 (216 aa).

Transmembrane regions (helical) follow at residues 3–23 (WMWLLSGACIVFTLGMFSSGL), 36–56 (ENIQYLPFLTTDLNNLGWFYY), 65–85 (LMIVNVIGASLQSLYMGAYLL), 96–116 (QVLVSLGVLLLGYCYFTLWIL), 125–145 (LGLFCSVFTISMYLSPLADLA), 157–177 (SFPLTVATFLTSSSWVLYGLV), and 181–201 (LYITVPNFPGIVTSLVRFWLF). One can recognise a MtN3/slv 1 domain in the interval 6–90 (LLSGACIVFT…GAYLLYSPER (85 aa)). Residues 124–206 (QLGLFCSVFT…RFWLFSQFPP (83 aa)) enclose the MtN3/slv 2 domain.

This sequence belongs to the SWEET sugar transporter family.

It localises to the golgi apparatus membrane. Its subcellular location is the cell membrane. Mediates sugar transport across membranes. The protein is Sugar transporter SWEET1 (slc50a1) of Xenopus laevis (African clawed frog).